The primary structure comprises 314 residues: MSNSASSFTGVSSGYTAGTPVPADSPIRDNIADAVRRVRETTPLAQSFTTFVTINLVANAQLAAGGTAAMSFLPDDVIETAKIAGANYINVGTLLPFYKDALPEIAQRLNYLDKPWVLDPVAAGIGRTRTAILQAFKAAPPTMIRANASEVIALANMWGLNTETVGDASEHRPAGVESVDDVESATGAAVALAQYLTEQHAKHSSHDASTRCAVAVSGIADLVTDGETVYRLPGGSAMMTKITGAGCSLGGVAATYLAVSDPLTAALSASLLYNRAGEVADTTSHGPGSFQVAFLDALWNVTAEQVAESEILVQ.

Position 70 (methionine 70) interacts with substrate. The ATP site is built by arginine 145 and serine 217. Glycine 244 lines the substrate pocket.

The protein belongs to the Thz kinase family. Mg(2+) is required as a cofactor.

It catalyses the reaction 5-(2-hydroxyethyl)-4-methylthiazole + ATP = 4-methyl-5-(2-phosphooxyethyl)-thiazole + ADP + H(+). It participates in cofactor biosynthesis; thiamine diphosphate biosynthesis; 4-methyl-5-(2-phosphoethyl)-thiazole from 5-(2-hydroxyethyl)-4-methylthiazole: step 1/1. Functionally, catalyzes the phosphorylation of the hydroxyl group of 4-methyl-5-beta-hydroxyethylthiazole (THZ). The polypeptide is Hydroxyethylthiazole kinase (Bifidobacterium longum (strain DJO10A)).